The following is a 242-amino-acid chain: GATA zinc finger domain-containing protein 1 (242 aa).

The GATA-type zinc-finger motif lies at 9-33; that stretch reads CAVCKTQSSSMWKKGNQGEILCNGC. A disordered region spans residues 44–85; the sequence is GASASSTIQQNNGGGKQSKQEIHRRSARLRSTKYKAPASEKK. Over residues 45 to 54 the composition is skewed to low complexity; it reads ASASSTIQQN.

Its subcellular location is the nucleus. In terms of biological role, component of some chromatin complex recruited to chromatin sites methylated 'Lys-4' of histone H3 (H3K4me), with a preference for trimethylated form (H3K4me3). This is GATA zinc finger domain-containing protein 1 (gatad1) from Danio rerio (Zebrafish).